Reading from the N-terminus, the 1607-residue chain is Dicer-like protein 1 (1607 aa).

The tract at residues 1–74 (MNAEMREGSS…PDTKKWIVND (74 aa)) is disordered. One can recognise a Helicase ATP-binding domain in the interval 142 to 324 (LFERAKTQNT…IARSPELEGL (183 aa)). Residue 155-162 (LDTGSGKT) participates in ATP binding. Residues 267–270 (DEAH) carry the DEAH box motif. The region spanning 461–632 (KVVILLRILR…EALPADRKLT (172 aa)) is the Helicase C-terminal domain. Positions 665–755 (SLICLAAFVA…RPTFTKQLPA (91 aa)) constitute a Dicer dsRNA-binding fold domain. The PAZ domain occupies 905 to 1040 (GAVTFVRDNE…IVLEPLRISP (136 aa)). 2 consecutive RNase III domains span residues 1063-1219 (LVAL…LTAQ) and 1272-1447 (AARF…VDSR). Positions 1312, 1433, and 1436 each coordinate Mg(2+). The DRBM domain maps to 1478–1556 (HPVTFLAGIM…AKKAIQVLEG (79 aa)). Cys1493, His1527, Cys1568, and Cys1570 together coordinate Zn(2+).

Belongs to the helicase family. Dicer subfamily. It depends on Mg(2+) as a cofactor. Mn(2+) serves as cofactor.

Its function is as follows. Dicer-like endonuclease involved in cleaving double-stranded RNA in the RNA interference (RNAi) pathway. Produces 21 to 25 bp dsRNAs (siRNAs) which target the selective destruction of homologous RNAs leading to sequence-specific suppression of gene expression, called post-transcriptional gene silencing (PTGS). Part of a broad host defense response against viral infection and transposons. This chain is Dicer-like protein 1 (DCL1), found in Chaetomium globosum (strain ATCC 6205 / CBS 148.51 / DSM 1962 / NBRC 6347 / NRRL 1970) (Soil fungus).